The following is a 297-amino-acid chain: Undecaprenyl-diphosphatase 3 (297 aa).

Transmembrane regions (helical) follow at residues P39–F59, W89–I109, L118–S138, F203–G223, P237–L257, and F268–I288.

Belongs to the UppP family.

The protein resides in the cell membrane. The enzyme catalyses di-trans,octa-cis-undecaprenyl diphosphate + H2O = di-trans,octa-cis-undecaprenyl phosphate + phosphate + H(+). In terms of biological role, catalyzes the dephosphorylation of undecaprenyl diphosphate (UPP). Confers resistance to bacitracin. The chain is Undecaprenyl-diphosphatase 3 from Frankia alni (strain DSM 45986 / CECT 9034 / ACN14a).